Reading from the N-terminus, the 366-residue chain is Ubiquitin carboxyl-terminal hydrolase 46 (366 aa).

Residues 35–365 form the USP domain; the sequence is FGLVNFGNTC…SGYILFYQSR (331 aa). The active-site Nucleophile is Cys-44. Zn(2+) is bound by residues Cys-182, Cys-185, Cys-229, and Cys-232. His-313 (proton acceptor) is an active-site residue.

The protein belongs to the peptidase C19 family. USP12/USP46 subfamily. Interacts with WDR48. Interacts with WDR20. Interacts with DMWD. Component of the USP46/WDR20/WDR48 deubiquitinating complex. As to expression, detected in lung and spleen, and at lower levels in brain, kidney, testis and liver.

The protein localises to the cytoplasm. The catalysed reaction is Thiol-dependent hydrolysis of ester, thioester, amide, peptide and isopeptide bonds formed by the C-terminal Gly of ubiquitin (a 76-residue protein attached to proteins as an intracellular targeting signal).. Functionally, deubiquitinating enzyme that plays a role in behavior, possibly by regulating GABA action. May act by mediating the deubiquitination of GAD1/GAD67. Has almost no deubiquitinating activity by itself and requires the interaction with WDR48 to have a high activity. Not involved in deubiquitination of monoubiquitinated FANCD2. The polypeptide is Ubiquitin carboxyl-terminal hydrolase 46 (Rattus norvegicus (Rat)).